Consider the following 319-residue polypeptide: Acetyl-coenzyme A carboxylase carboxyl transferase subunit alpha (319 aa).

In terms of domain architecture, CoA carboxyltransferase C-terminal spans 32–293 (NVDIEVRALE…KAVLLNELEA (262 aa)).

It belongs to the AccA family. Acetyl-CoA carboxylase is a heterohexamer composed of biotin carboxyl carrier protein (AccB), biotin carboxylase (AccC) and two subunits each of ACCase subunit alpha (AccA) and ACCase subunit beta (AccD).

It is found in the cytoplasm. It catalyses the reaction N(6)-carboxybiotinyl-L-lysyl-[protein] + acetyl-CoA = N(6)-biotinyl-L-lysyl-[protein] + malonyl-CoA. It functions in the pathway lipid metabolism; malonyl-CoA biosynthesis; malonyl-CoA from acetyl-CoA: step 1/1. Functionally, component of the acetyl coenzyme A carboxylase (ACC) complex. First, biotin carboxylase catalyzes the carboxylation of biotin on its carrier protein (BCCP) and then the CO(2) group is transferred by the carboxyltransferase to acetyl-CoA to form malonyl-CoA. This Xylella fastidiosa (strain Temecula1 / ATCC 700964) protein is Acetyl-coenzyme A carboxylase carboxyl transferase subunit alpha.